The following is a 327-amino-acid chain: Cytochrome c oxidase subunit 2 (327 aa).

An N-terminal signal peptide occupies residues 1–23 (MEQIPASIWTLTAGVVVTLISFW). 2 helical membrane passes run 56–78 (LFLV…AGEE) and 96–114 (AIPA…DIFQ). Cu cation contacts are provided by H221, C255, C259, and H263.

The protein belongs to the cytochrome c oxidase subunit 2 family. Requires Cu cation as cofactor.

The protein localises to the cell membrane. The enzyme catalyses 4 Fe(II)-[cytochrome c] + O2 + 8 H(+)(in) = 4 Fe(III)-[cytochrome c] + 2 H2O + 4 H(+)(out). Its function is as follows. Subunits I and II form the functional core of the enzyme complex. Electrons originating in cytochrome c are transferred via heme a and Cu(A) to the binuclear center formed by heme a3 and Cu(B). The protein is Cytochrome c oxidase subunit 2 (ctaC) of Thermostichus vulcanus (Synechococcus vulcanus).